Here is an 882-residue protein sequence, read N- to C-terminus: Translation initiation factor IF-2 (882 aa).

Residues 38–294 are disordered; sequence IEDSQASWVK…KSKHKRKKEN (257 aa). Basic and acidic residues-rich tracts occupy residues 66-76, 109-128, and 207-219; these read TRDEAVKKHSG, GRRE…ERHS, and PDNK…DAKR. The span at 282–292 shows a compositional bias: basic residues; the sequence is PGRKSKHKRKK. Residues 383–556 enclose the tr-type G domain; it reads ARPPVVTIMG…EMNEIRANPD (174 aa). Residues 392-399 are G1; that stretch reads GHVDHGKT. 392–399 is a GTP binding site; it reads GHVDHGKT. Residues 417 to 421 form a G2 region; sequence GITQH. The G3 stretch occupies residues 438–441; it reads DTPG. Residues 438–442 and 492–495 each bind GTP; these read DTPGH and NKID. The tract at residues 492 to 495 is G4; the sequence is NKID. A G5 region spans residues 528–530; it reads SAK.

Belongs to the TRAFAC class translation factor GTPase superfamily. Classic translation factor GTPase family. IF-2 subfamily.

The protein resides in the cytoplasm. Functionally, one of the essential components for the initiation of protein synthesis. Protects formylmethionyl-tRNA from spontaneous hydrolysis and promotes its binding to the 30S ribosomal subunits. Also involved in the hydrolysis of GTP during the formation of the 70S ribosomal complex. This is Translation initiation factor IF-2 from Syntrophomonas wolfei subsp. wolfei (strain DSM 2245B / Goettingen).